Reading from the N-terminus, the 560-residue chain is DNA ligase B (560 aa).

Lys124 (N6-AMP-lysine intermediate) is an active-site residue.

Belongs to the NAD-dependent DNA ligase family. LigB subfamily.

The catalysed reaction is NAD(+) + (deoxyribonucleotide)n-3'-hydroxyl + 5'-phospho-(deoxyribonucleotide)m = (deoxyribonucleotide)n+m + AMP + beta-nicotinamide D-nucleotide.. Its function is as follows. Catalyzes the formation of phosphodiester linkages between 5'-phosphoryl and 3'-hydroxyl groups in double-stranded DNA using NAD as a coenzyme and as the energy source for the reaction. In Escherichia coli O1:K1 / APEC, this protein is DNA ligase B.